The sequence spans 353 residues: Ferredoxin--NADP reductase 1 (353 aa).

FAD-binding residues include Asp43, Gln51, Tyr56, Ala96, Phe135, Asp300, and Ser341.

Belongs to the ferredoxin--NADP reductase type 2 family. Homodimer. The cofactor is FAD.

It carries out the reaction 2 reduced [2Fe-2S]-[ferredoxin] + NADP(+) + H(+) = 2 oxidized [2Fe-2S]-[ferredoxin] + NADPH. This is Ferredoxin--NADP reductase 1 from Cupriavidus metallidurans (strain ATCC 43123 / DSM 2839 / NBRC 102507 / CH34) (Ralstonia metallidurans).